A 929-amino-acid polypeptide reads, in one-letter code: Isoleucine--tRNA ligase (929 aa).

The 'HIGH' region signature appears at 58 to 68 (PYANGDIHIGH). Position 563 (glutamate 563) interacts with L-isoleucyl-5'-AMP. The 'KMSKS' region signature appears at 605-609 (KMSKS). Lysine 608 serves as a coordination point for ATP. Zn(2+) is bound by residues cysteine 892, cysteine 895, cysteine 912, and cysteine 915.

It belongs to the class-I aminoacyl-tRNA synthetase family. IleS type 1 subfamily. As to quaternary structure, monomer. The cofactor is Zn(2+).

The protein resides in the cytoplasm. It carries out the reaction tRNA(Ile) + L-isoleucine + ATP = L-isoleucyl-tRNA(Ile) + AMP + diphosphate. Its function is as follows. Catalyzes the attachment of isoleucine to tRNA(Ile). As IleRS can inadvertently accommodate and process structurally similar amino acids such as valine, to avoid such errors it has two additional distinct tRNA(Ile)-dependent editing activities. One activity is designated as 'pretransfer' editing and involves the hydrolysis of activated Val-AMP. The other activity is designated 'posttransfer' editing and involves deacylation of mischarged Val-tRNA(Ile). The polypeptide is Isoleucine--tRNA ligase (Neisseria meningitidis serogroup B (strain ATCC BAA-335 / MC58)).